A 124-amino-acid polypeptide reads, in one-letter code: Small ribosomal subunit protein uS12 (124 aa).

Residues 1–22 (MATINQLVRKPRKRKVAKSDVP) are disordered. 3-methylthioaspartic acid is present on Asp89. Residues 101 to 124 (TLDTQGVQNRKQGRSKYGAKRPKS) form a disordered region. Residues 111–124 (KQGRSKYGAKRPKS) show a composition bias toward basic residues.

It belongs to the universal ribosomal protein uS12 family. As to quaternary structure, part of the 30S ribosomal subunit. Contacts proteins S8 and S17. May interact with IF1 in the 30S initiation complex.

In terms of biological role, with S4 and S5 plays an important role in translational accuracy. Functionally, interacts with and stabilizes bases of the 16S rRNA that are involved in tRNA selection in the A site and with the mRNA backbone. Located at the interface of the 30S and 50S subunits, it traverses the body of the 30S subunit contacting proteins on the other side and probably holding the rRNA structure together. The combined cluster of proteins S8, S12 and S17 appears to hold together the shoulder and platform of the 30S subunit. The protein is Small ribosomal subunit protein uS12 of Marinobacter nauticus (strain ATCC 700491 / DSM 11845 / VT8) (Marinobacter aquaeolei).